The chain runs to 252 residues: NADP-dependent (R)-specific alcohol dehydrogenase (252 aa).

NADP(+)-binding positions include 16–19 (TLGI), 39–40 (RH), 63–64 (DA), Asn-90, Tyr-156, Lys-160, and 191–195 (IKTPL). Tyr-156 (proton donor/acceptor) is an active-site residue. Position 252 (Gln-252) interacts with Mg(2+).

This sequence belongs to the short-chain dehydrogenases/reductases (SDR) family. In terms of assembly, homotetramer. The cofactor is Mg(2+).

It catalyses the reaction a secondary alcohol + NADP(+) = a ketone + NADPH + H(+). It carries out the reaction acetophenone + NADPH + H(+) = (R)-1-phenylethanol + NADP(+). The enzyme catalyses 2,5-hexanedione + 2 NADPH + 2 H(+) = (2R,5R)-hexanediol + 2 NADP(+). The catalysed reaction is ethyl 3-oxobutanoate + NADPH + H(+) = ethyl (R)-3-hydroxybutanoate + NADP(+). It catalyses the reaction 2-octanone + NADPH + H(+) = (2R)-octan-2-ol + NADP(+). NADP-dependent (R)-specific alcohol dehydrogenase (ADH) with a broad substrate specificity, able to catalyze in vitro the stereoselective reduction of several aliphatic and aromatic ketones as well as beta-keto esters to the corresponding enantiomerically pure alcohols. The polypeptide is NADP-dependent (R)-specific alcohol dehydrogenase (Lentilactobacillus kefiri (Lactobacillus kefiri)).